The primary structure comprises 428 residues: Patatin-like protein 3 (428 aa).

A PNPLA domain is found at Leu-38–Ile-252. Positions Gly-42–Gly-47 match the GXGXXG motif. Residues Gly-80–Gly-84 carry the GXSXG motif. Ser-82 serves as the catalytic Nucleophile. Residue Asp-239 is the Proton acceptor of the active site. The short motif at Asp-239–Gly-241 is the DGA/G element. Residue Ser-423 is modified to Phosphoserine.

The protein belongs to the patatin family. Expressed specifically in the stigma, ovary and funiculus of the ovary.

The protein resides in the cytoplasm. Functionally, possesses non-specific lipolytic acyl hydrolase (LAH) activity. Catalyzes the hydrolysis of the neutral lipids monogalactosyldiacylglycerol (MGDG), digalactosyldiacylglycerol (DGDG) and phosphatidylglycerol (PG), and less efficiently the polar lipids phosphatidylcholine (PC) and phosphatidylinositol (PI), but not the storage lipid triacylglycerol (TAG). May play a role in root development. The sequence is that of Patatin-like protein 3 (PLP3) from Arabidopsis thaliana (Mouse-ear cress).